A 518-amino-acid polypeptide reads, in one-letter code: Integrator complex subunit 14 (518 aa).

Residues 2-204 form the VWFA domain; it reads PTVVVMDVSL…KNVQSMFGKL (203 aa). Residues Ser-10, Ser-12, and Thr-86 each coordinate Mg(2+).

This sequence belongs to the Integrator subunit 14 family. Component of the Integrator complex, composed of core subunits INTS1, INTS2, INTS3, INTS4, INTS5, INTS6, INTS7, INTS8, INTS9/RC74, INTS10, INTS11/CPSF3L, INTS12, INTS13, INTS14 and INTS15. The core complex associates with protein phosphatase 2A subunits PPP2CA and PPP2R1A, to form the Integrator-PP2A (INTAC) complex. INTS14 is part of the tail subcomplex, composed of INTS10, INTS13, INTS14 and INTS15.

It localises to the nucleus. Its function is as follows. Component of the integrator complex, a multiprotein complex that terminates RNA polymerase II (Pol II) transcription in the promoter-proximal region of genes. The integrator complex provides a quality checkpoint during transcription elongation by driving premature transcription termination of transcripts that are unfavorably configured for transcriptional elongation: the complex terminates transcription by (1) catalyzing dephosphorylation of the C-terminal domain (CTD) of Pol II subunit POLR2A/RPB1 and SUPT5H/SPT5, (2) degrading the exiting nascent RNA transcript via endonuclease activity and (3) promoting the release of Pol II from bound DNA. The integrator complex is also involved in terminating the synthesis of non-coding Pol II transcripts, such as enhancer RNAs (eRNAs), small nuclear RNAs (snRNAs), telomerase RNAs and long non-coding RNAs (lncRNAs). Within the integrator complex, INTS14 is part of the integrator tail module that acts as a platform for the recruitment of transcription factors at promoters. The polypeptide is Integrator complex subunit 14 (Xenopus tropicalis (Western clawed frog)).